Reading from the N-terminus, the 181-residue chain is Acireductone dioxygenase (181 aa).

Positions 97, 99, 103, and 141 each coordinate Fe(2+). Ni(2+) is bound by residues H97, H99, E103, and H141.

It belongs to the acireductone dioxygenase (ARD) family. As to quaternary structure, monomer. Fe(2+) is required as a cofactor. Ni(2+) serves as cofactor.

The catalysed reaction is 1,2-dihydroxy-5-(methylsulfanyl)pent-1-en-3-one + O2 = 3-(methylsulfanyl)propanoate + CO + formate + 2 H(+). It catalyses the reaction 1,2-dihydroxy-5-(methylsulfanyl)pent-1-en-3-one + O2 = 4-methylsulfanyl-2-oxobutanoate + formate + 2 H(+). It participates in amino-acid biosynthesis; L-methionine biosynthesis via salvage pathway; L-methionine from S-methyl-5-thio-alpha-D-ribose 1-phosphate: step 5/6. In terms of biological role, catalyzes 2 different reactions between oxygen and the acireductone 1,2-dihydroxy-3-keto-5-methylthiopentene (DHK-MTPene) depending upon the metal bound in the active site. Fe-containing acireductone dioxygenase (Fe-ARD) produces formate and 2-keto-4-methylthiobutyrate (KMTB), the alpha-ketoacid precursor of methionine in the methionine recycle pathway. Ni-containing acireductone dioxygenase (Ni-ARD) produces methylthiopropionate, carbon monoxide and formate, and does not lie on the methionine recycle pathway. This is Acireductone dioxygenase from Pseudomonas savastanoi pv. phaseolicola (strain 1448A / Race 6) (Pseudomonas syringae pv. phaseolicola (strain 1448A / Race 6)).